The primary structure comprises 341 residues: Glyceraldehyde-3-phosphate dehydrogenase 2 (341 aa).

Residues 13 to 14, Asp35, and Lys85 contribute to the NAD(+) site; that span reads RI. D-glyceraldehyde 3-phosphate-binding positions include 157–159, Thr188, 217–218, and Arg240; these read SCT and TG. The Nucleophile role is filled by Cys158. An NAD(+)-binding site is contributed by Asn322.

The protein belongs to the glyceraldehyde-3-phosphate dehydrogenase family. In terms of assembly, homotetramer.

It localises to the cytoplasm. The enzyme catalyses D-glyceraldehyde 3-phosphate + phosphate + NAD(+) = (2R)-3-phospho-glyceroyl phosphate + NADH + H(+). Its pathway is carbohydrate degradation; glycolysis; pyruvate from D-glyceraldehyde 3-phosphate: step 1/5. In Caenorhabditis briggsae, this protein is Glyceraldehyde-3-phosphate dehydrogenase 2.